The following is a 200-amino-acid chain: Methylamine utilization protein MauD (200 aa).

Residues 4–24 form a helical membrane-spanning segment; it reads FLIASNILLWLAFLGVTVVML. The region spanning 49–183 is the Thioredoxin domain; that stretch reads PDIGDAAPEF…LESLLEADRT (135 aa).

It localises to the membrane. It functions in the pathway one-carbon metabolism; methylamine degradation. Functionally, may be specifically involved in the processing, transport, and/or maturation of the MADH beta-subunit. The polypeptide is Methylamine utilization protein MauD (mauD) (Paracoccus denitrificans).